A 421-amino-acid polypeptide reads, in one-letter code: Type II methyltransferase M.SfiI (421 aa).

The protein belongs to the N(4)/N(6)-methyltransferase family. N(4) subfamily.

It catalyses the reaction a 2'-deoxycytidine in DNA + S-adenosyl-L-methionine = an N(4)-methyl-2'-deoxycytidine in DNA + S-adenosyl-L-homocysteine + H(+). A beta subtype methylase, recognizes the double-stranded sequence 5'-GGCCNNNNNGGCC-3', methylates C-? on both strands, and protects the DNA from cleavage by the SfiI endonuclease. In Streptomyces fimbriatus, this protein is Type II methyltransferase M.SfiI.